Reading from the N-terminus, the 338-residue chain is Ornithine carbamoyltransferase (338 aa).

Carbamoyl phosphate is bound by residues 56 to 59, Arg-107, and 134 to 137; these read STRT and HPTQ. L-ornithine contacts are provided by residues Asn-168, Asp-232, and 236 to 237; that span reads SM. Carbamoyl phosphate is bound by residues 274-275 and Arg-320; that span reads CL.

Belongs to the aspartate/ornithine carbamoyltransferase superfamily. OTCase family.

It localises to the cytoplasm. It carries out the reaction carbamoyl phosphate + L-ornithine = L-citrulline + phosphate + H(+). The protein operates within amino-acid degradation; L-arginine degradation via ADI pathway; carbamoyl phosphate from L-arginine: step 2/2. In terms of biological role, reversibly catalyzes the transfer of the carbamoyl group from carbamoyl phosphate (CP) to the N(epsilon) atom of ornithine (ORN) to produce L-citrulline. This Buchnera aphidicola subsp. Acyrthosiphon pisum (strain 5A) protein is Ornithine carbamoyltransferase.